The following is a 220-amino-acid chain: Ribosomal RNA small subunit methyltransferase G (220 aa).

Residues Gly-78, Phe-83, 129–130 (GE), and Arg-146 each bind S-adenosyl-L-methionine.

The protein belongs to the methyltransferase superfamily. RNA methyltransferase RsmG family.

The protein localises to the cytoplasm. It carries out the reaction guanosine(527) in 16S rRNA + S-adenosyl-L-methionine = N(7)-methylguanosine(527) in 16S rRNA + S-adenosyl-L-homocysteine. Specifically methylates the N7 position of guanine in position 527 of 16S rRNA. The polypeptide is Ribosomal RNA small subunit methyltransferase G (Geobacter metallireducens (strain ATCC 53774 / DSM 7210 / GS-15)).